Here is a 407-residue protein sequence, read N- to C-terminus: TOM1-like protein 1 (407 aa).

G2 is subject to N-acetylglycine. The VHS domain occupies 55–183; that stretch reads ATTENLEEPD…SLKARGIRFP (129 aa). The GAT domain maps to 228 to 315; sequence FTAEQTKEAF…TLSKYEEMNK (88 aa). Positions 315 to 407 are disordered; that stretch reads KPSAPLTSHE…SSKNDDLIRF (93 aa). S337 carries the post-translational modification Phosphoserine. Positions 337 to 347 are enriched in basic and acidic residues; the sequence is SPIHGREESLV. Over residues 353 to 364 the composition is skewed to gly residues; that stretch reads VRGGFHGGGGSG. The span at 388 to 407 shows a compositional bias: basic and acidic residues; sequence PDHDPKKEQSSSKNDDLIRF.

This sequence belongs to the TOM1 family. In terms of tissue distribution, ubiquitously expressed.

The protein resides in the membrane. In terms of biological role, might contribute to the loading of the ESCRT machinery. The chain is TOM1-like protein 1 from Arabidopsis thaliana (Mouse-ear cress).